Reading from the N-terminus, the 333-residue chain is Ribokinase (333 aa).

Residues 10-12, 38-42, and Glu149 each bind substrate; these read NYD and GKGLN. ATP-binding positions include Asn193 and 248–253; that span reads TLGSRG. K(+)-binding residues include Asp277 and Thr279. 282 to 283 contributes to the ATP binding site; that stretch reads GD. Residue Asp283 participates in substrate binding. Asp283 functions as the Proton acceptor in the catalytic mechanism. Residues Thr313, Arg316, Gly318, and Ser322 each contribute to the K(+) site.

It belongs to the carbohydrate kinase PfkB family. Ribokinase subfamily. Homodimer. The cofactor is Mg(2+).

It localises to the cytoplasm. The protein localises to the nucleus. The catalysed reaction is D-ribose + ATP = D-ribose 5-phosphate + ADP + H(+). The protein operates within carbohydrate metabolism; D-ribose degradation; D-ribose 5-phosphate from beta-D-ribopyranose: step 2/2. Activated by a monovalent cation that binds near, but not in, the active site. The most likely occupant of the site in vivo is potassium. Ion binding induces a conformational change that may alter substrate affinity. Its function is as follows. Catalyzes the phosphorylation of ribose at O-5 in a reaction requiring ATP and magnesium. The resulting D-ribose-5-phosphate can then be used either for sythesis of nucleotides, histidine, and tryptophan, or as a component of the pentose phosphate pathway. The chain is Ribokinase from Saccharomyces cerevisiae (strain ATCC 204508 / S288c) (Baker's yeast).